The following is a 177-amino-acid chain: MSRIGKKPVSVPAGVTAAIEGKTLSVKGPKGTLSISLADEVSYAIEDGSISVQPINETKRARSFWGMQRTLVQNLITGVTEGYSKTLQITGVGYRANVQGKNLKLQLGYSHDVDFAIPEGITIATPDQTTVQISGIDKQKVGQVAAEIRRWRKPEPYKGKGIKYAGEYIFRKEGKKK.

The protein belongs to the universal ribosomal protein uL6 family. As to quaternary structure, part of the 50S ribosomal subunit.

Functionally, this protein binds to the 23S rRNA, and is important in its secondary structure. It is located near the subunit interface in the base of the L7/L12 stalk, and near the tRNA binding site of the peptidyltransferase center. The protein is Large ribosomal subunit protein uL6 of Rhizorhabdus wittichii (strain DSM 6014 / CCUG 31198 / JCM 15750 / NBRC 105917 / EY 4224 / RW1) (Sphingomonas wittichii).